A 196-amino-acid chain; its full sequence is ATP-dependent Clp protease proteolytic subunit (196 aa).

Catalysis depends on Ser101, which acts as the Nucleophile. His126 is an active-site residue.

The protein belongs to the peptidase S14 family. In terms of assembly, component of the chloroplastic Clp protease core complex.

It is found in the plastid. Its subcellular location is the chloroplast stroma. The enzyme catalyses Hydrolysis of proteins to small peptides in the presence of ATP and magnesium. alpha-casein is the usual test substrate. In the absence of ATP, only oligopeptides shorter than five residues are hydrolyzed (such as succinyl-Leu-Tyr-|-NHMec, and Leu-Tyr-Leu-|-Tyr-Trp, in which cleavage of the -Tyr-|-Leu- and -Tyr-|-Trp bonds also occurs).. Its function is as follows. Cleaves peptides in various proteins in a process that requires ATP hydrolysis. Has a chymotrypsin-like activity. Plays a major role in the degradation of misfolded proteins. The sequence is that of ATP-dependent Clp protease proteolytic subunit from Citrus sinensis (Sweet orange).